The primary structure comprises 161 residues: Cyclic pyranopterin monophosphate synthase (161 aa).

Residues 78–80 and 116–117 each bind substrate; these read LCH and ME. Residue Asp131 is part of the active site.

It belongs to the MoaC family. In terms of assembly, homohexamer; trimer of dimers.

The catalysed reaction is (8S)-3',8-cyclo-7,8-dihydroguanosine 5'-triphosphate = cyclic pyranopterin phosphate + diphosphate. The protein operates within cofactor biosynthesis; molybdopterin biosynthesis. Catalyzes the conversion of (8S)-3',8-cyclo-7,8-dihydroguanosine 5'-triphosphate to cyclic pyranopterin monophosphate (cPMP). This Bordetella parapertussis (strain 12822 / ATCC BAA-587 / NCTC 13253) protein is Cyclic pyranopterin monophosphate synthase.